The sequence spans 101 residues: Small ribosomal subunit protein uS10 (101 aa).

The protein belongs to the universal ribosomal protein uS10 family. As to quaternary structure, part of the 30S ribosomal subunit.

In terms of biological role, involved in the binding of tRNA to the ribosomes. This chain is Small ribosomal subunit protein uS10, found in Phocaeicola vulgatus (strain ATCC 8482 / DSM 1447 / JCM 5826 / CCUG 4940 / NBRC 14291 / NCTC 11154) (Bacteroides vulgatus).